A 299-amino-acid chain; its full sequence is Anti-sigma-D factor RsdA (299 aa).

A helical transmembrane segment spans residues 86–106; it reads LAAVGSVAAALLVLSGFGAVV. The disordered stretch occupies residues 187-299; the sequence is NTKVETRDPN…APETPVSPTH (113 aa). Composition is skewed to low complexity over residues 201–212 and 250–271; these read PGSPSNPAAPGS and PNST…EPGS.

In terms of assembly, interacts with ECF RNA polymerase sigma factor SigD; this should inhibit the interaction of SigD with the RNA polymerase catalytic core. Post-translationally, the cytosolic fragment is degraded by a ClpP1-ClpP2-ClpX complex, as would be expected after S1P and S2P intramembrane proteolysis. This releases SigD so that it may bind to the RNA polymerase catalytic core.

It is found in the cell membrane. Its function is as follows. An anti-sigma factor for extracytoplasmic function (ECF) sigma factor SigD. ECF sigma factors are held in an inactive form by an anti-sigma factor until released by regulated intramembrane proteolysis (RIP). RIP occurs when an extracytoplasmic signal triggers a concerted proteolytic cascade to transmit information and elicit cellular responses. The membrane-spanning regulatory substrate protein is first cut extracytoplasmically (site-1 protease, S1P), then within the membrane itself (site-2 protease, S2P), while cytoplasmic proteases finish degrading the regulatory protein, liberating the sigma factor. Neither S1P nor S2P proteases have been so far identified for this anti-sigma factor. The chain is Anti-sigma-D factor RsdA (rsda) from Mycobacterium bovis (strain ATCC BAA-935 / AF2122/97).